The following is a 177-amino-acid chain: Cytochrome c-type biogenesis protein CcmE (177 aa).

Over 1-7 the chain is Cytoplasmic; it reads MTRKSRR. The helical; Signal-anchor for type II membrane protein transmembrane segment at 8-28 threads the bilayer; sequence LILIAACGAVLALALGLILSA. The Periplasmic portion of the chain corresponds to 29–177; it reads MSGSIVFFRS…DATLGQRSER (149 aa). Residues H122 and Y126 each contribute to the heme site. The segment at 133 to 177 is disordered; the sequence is DALKAQGRWQEGGSKEAPKDASKAAPKDAAKPETADATLGQRSER. The span at 145 to 166 shows a compositional bias: basic and acidic residues; that stretch reads GSKEAPKDASKAAPKDAAKPET.

Belongs to the CcmE/CycJ family.

It is found in the cell inner membrane. In terms of biological role, heme chaperone required for the biogenesis of c-type cytochromes. Transiently binds heme delivered by CcmC and transfers the heme to apo-cytochromes in a process facilitated by CcmF and CcmH. The chain is Cytochrome c-type biogenesis protein CcmE from Methylorubrum extorquens (strain PA1) (Methylobacterium extorquens).